Reading from the N-terminus, the 177-residue chain is Inner membrane-spanning protein YciB (177 aa).

5 helical membrane passes run isoleucine 22 to isoleucine 42, isoleucine 50 to asparagine 70, tryptophan 76 to methionine 96, phenylalanine 121 to leucine 141, and valine 151 to phenylalanine 171.

This sequence belongs to the YciB family.

Its subcellular location is the cell inner membrane. In terms of biological role, plays a role in cell envelope biogenesis, maintenance of cell envelope integrity and membrane homeostasis. This chain is Inner membrane-spanning protein YciB, found in Buchnera aphidicola subsp. Schizaphis graminum (strain Sg).